The following is a 178-amino-acid chain: Ribulose bisphosphate carboxylase small subunit, chloroplastic (178 aa).

A chloroplast-targeting transit peptide spans 1–54 (MASSMISSPAVTTVNRAGAGTVAPFTGLKSMAGFPTRKTNNDIASIASNGGRVQ).

Belongs to the RuBisCO small chain family. Heterohexadecamer of 8 large and 8 small subunits.

It localises to the plastid. The protein resides in the chloroplast. Functionally, ruBisCO catalyzes two reactions: the carboxylation of D-ribulose 1,5-bisphosphate, the primary event in carbon dioxide fixation, as well as the oxidative fragmentation of the pentose substrate. Both reactions occur simultaneously and in competition at the same active site. Although the small subunit is not catalytic it is essential for maximal activity. This chain is Ribulose bisphosphate carboxylase small subunit, chloroplastic, found in Glycine tabacina.